Reading from the N-terminus, the 341-residue chain is 4-amino-5-hydroxymethyl-2-methylpyrimidine phosphate synthase (341 aa).

The residue at position 62 (Lys62) is an N6-(pyridoxal phosphate)lysine. His66 is an active-site residue. 115–118 contacts pyridoxal 5'-phosphate; the sequence is GEFG. A CCCFC; essential for catalytic activity, may be the site of iron coordination motif is present at residues 195–199; it reads CCCFC.

This sequence belongs to the NMT1/THI5 family. In terms of assembly, homodimer. Requires Fe cation as cofactor.

It carries out the reaction N(6)-(pyridoxal phosphate)-L-lysyl-[4-amino-5-hydroxymethyl-2-methylpyrimidine phosphate synthase] + L-histidyl-[4-amino-5-hydroxymethyl-2-methylpyrimidine phosphate synthase] + 2 Fe(3+) + 4 H2O = L-lysyl-[4-amino-5-hydroxymethyl-2-methylpyrimidine phosphate synthase] + (2S)-2-amino-5-hydroxy-4-oxopentanoyl-[4-amino-5-hydroxymethyl-2-methylpyrimidine phosphate synthase] + 4-amino-2-methyl-5-(phosphooxymethyl)pyrimidine + 3-oxopropanoate + 2 Fe(2+) + 2 H(+). It participates in cofactor biosynthesis; thiamine diphosphate biosynthesis. In terms of biological role, responsible for the formation of the pyrimidine heterocycle in the thiamine biosynthesis pathway. Catalyzes the formation of hydroxymethylpyrimidine phosphate (HMP-P) from histidine and pyridoxal phosphate (PLP). The protein uses PLP and the active site histidine to form HMP-P, generating an inactive enzyme. The enzyme can only undergo a single turnover, which suggests it is a suicide enzyme. The protein is 4-amino-5-hydroxymethyl-2-methylpyrimidine phosphate synthase of Uromyces fabae (Rust fungus).